A 193-amino-acid polypeptide reads, in one-letter code: NADH-quinone oxidoreductase subunit B (193 aa).

4 residues coordinate [4Fe-4S] cluster: Cys72, Cys73, Cys137, and Cys167.

This sequence belongs to the complex I 20 kDa subunit family. In terms of assembly, NDH-1 is composed of 14 different subunits. Subunits NuoB, C, D, E, F, and G constitute the peripheral sector of the complex. [4Fe-4S] cluster serves as cofactor.

It is found in the cell inner membrane. It carries out the reaction a quinone + NADH + 5 H(+)(in) = a quinol + NAD(+) + 4 H(+)(out). NDH-1 shuttles electrons from NADH, via FMN and iron-sulfur (Fe-S) centers, to quinones in the respiratory chain. The immediate electron acceptor for the enzyme in this species is believed to be ubiquinone. Couples the redox reaction to proton translocation (for every two electrons transferred, four hydrogen ions are translocated across the cytoplasmic membrane), and thus conserves the redox energy in a proton gradient. In Phenylobacterium zucineum (strain HLK1), this protein is NADH-quinone oxidoreductase subunit B.